The following is a 428-amino-acid chain: Adenylosuccinate synthetase (428 aa).

GTP contacts are provided by residues Gly12 to Lys18 and Gly40 to Thr42. Asp13 acts as the Proton acceptor in catalysis. Mg(2+) contacts are provided by Asp13 and Gly40. IMP-binding positions include Asp13–Lys16, Asn38–His41, Thr129, Arg143, Gln224, Thr239, and Arg303. The active-site Proton donor is the His41. Substrate is bound at residue Val299–Arg305. Residues Arg305, Lys331–Asp333, and Gly413–Gly415 each bind GTP.

It belongs to the adenylosuccinate synthetase family. Homodimer. Requires Mg(2+) as cofactor.

The protein localises to the cytoplasm. The catalysed reaction is IMP + L-aspartate + GTP = N(6)-(1,2-dicarboxyethyl)-AMP + GDP + phosphate + 2 H(+). The protein operates within purine metabolism; AMP biosynthesis via de novo pathway; AMP from IMP: step 1/2. Its function is as follows. Plays an important role in the de novo pathway of purine nucleotide biosynthesis. Catalyzes the first committed step in the biosynthesis of AMP from IMP. The polypeptide is Adenylosuccinate synthetase (Saccharopolyspora erythraea (strain ATCC 11635 / DSM 40517 / JCM 4748 / NBRC 13426 / NCIMB 8594 / NRRL 2338)).